The sequence spans 192 residues: C-X-C chemokine receptor type 4 (192 aa).

Tyrosine 1 is subject to Sulfotyrosine. The tract at residues 1–11 (YTEDDLGSGDY) is important for chemokine binding and signaling. Topologically, residues 1–28 (YTEDDLGSGDYDSMKEPCFREENAHFNR) are extracellular. The O-linked (Xyl...) (chondroitin sulfate) serine glycan is linked to serine 8. Tyrosine 11 bears the Sulfotyrosine mark. Residues 29-53 (IFLPTVYSIIFLTGIVGNGLVILVM) form a helical membrane-spanning segment. Residues 54-67 (GYQKKLRSMTDKYR) lie on the Cytoplasmic side of the membrane. A helical membrane pass occupies residues 68–89 (LHLSVADLLFVLTLPFWAVDAV). The interval 84-87 (WAVD) is chemokine binding. The Extracellular segment spans residues 90 to 100 (ANWYFGQFLCK). Cysteine 99 and cysteine 176 are disulfide-bonded. The helical transmembrane segment at 101–120 (AVHVIYTVNLYSSVLILAFI) threads the bilayer. The chemokine binding stretch occupies residues 103-107 (HVIYT). Over 121–144 (SLDRYLAIVHATNSQRPRKLLAEK) the chain is Cytoplasmic. The Important for signaling signature appears at 123-125 (DRY). Positions 125-137 (YLAIVHATNSQRP) are involved in dimerization; when bound to chemokine. A helical transmembrane segment spans residues 145 to 164 (VVYVGVWLPAVLLTIPDLIF). Residues 165-185 (ADIKEADERYICDRFYPSDLW) are Extracellular-facing. The chemokine binding, important for signaling stretch occupies residues 176 to 180 (CDRFY). Residues 186–192 (LVVFQFQ) form a helical membrane-spanning segment.

This sequence belongs to the G-protein coupled receptor 1 family. Monomer. Can form homodimers. Interacts with CD164. Interacts with ARRB2; the interaction is dependent on the C-terminal phosphorylation of CXCR4 and allows activation of MAPK1 and MAPK3. Interacts with ARR3; the interaction is dependent on the C-terminal phosphorylation of CXCR4 and modulates calcium mobilization. Interacts with RNF113A; the interaction, enhanced by CXCL12, promotes CXCR4 ubiquitination and subsequent degradation. Interacts (via the cytoplasmic C-terminal) with ITCH (via the WW domains I and II); the interaction, enhanced by CXCL12, promotes CXCR4 ubiquitination and leads to its degradation. Interacts with extracellular ubiquitin. Interacts with DBN1; this interaction is enhanced by antigenic stimulation. Following LPS binding, may form a complex with GDF5, HSP90AA1 and HSPA8. Phosphorylated on agonist stimulation. Rapidly phosphorylated on serine and threonine residues in the C-terminal. In terms of processing, ubiquitinated after ligand binding, leading to its degradation. Ubiquitinated by ITCH at the cell membrane on agonist stimulation. The ubiquitin-dependent mechanism, endosomal sorting complex required for transport (ESCRT), then targets CXCR4 for lysosomal degradation. This process is dependent also on prior Ser-/Thr-phosphorylation in the C-terminal of CXCR4. Also binding of ARRB1 to STAM negatively regulates CXCR4 sorting to lysosomes though modulating ubiquitination of SFR5S. Post-translationally, sulfation is required for efficient binding of CXCL12/SDF-1alpha and promotes its dimerization. O- and N-glycosylated. N-glycosylation can mask coreceptor function. The O-glycosylation chondroitin sulfate attachment does not affect interaction with CXCL12/SDF-1alpha nor its coreceptor activity.

The protein resides in the cell membrane. It is found in the cell junction. The protein localises to the early endosome. It localises to the late endosome. Its subcellular location is the lysosome. In terms of biological role, receptor for the C-X-C chemokine CXCL12/SDF-1 that transduces a signal by increasing intracellular calcium ion levels and enhancing MAPK1/MAPK3 activation. Involved in the AKT signaling cascade. Plays a role in regulation of cell migration, e.g. during wound healing. Acts as a receptor for extracellular ubiquitin; leading to enhanced intracellular calcium ions and reduced cellular cAMP levels. Binds bacterial lipopolysaccharide (LPS) et mediates LPS-induced inflammatory response, including TNF secretion by monocytes. Involved in hematopoiesis and in cardiac ventricular septum formation. Also plays an essential role in vascularization of the gastrointestinal tract, probably by regulating vascular branching and/or remodeling processes in endothelial cells. Involved in cerebellar development. In the CNS, could mediate hippocampal-neuron survival. The chain is C-X-C chemokine receptor type 4 (CXCR4) from Ovis aries (Sheep).